The sequence spans 115 residues: Putative UPF0320 protein YKL225W (115 aa).

This sequence belongs to the UPF0320 family.

The polypeptide is Putative UPF0320 protein YKL225W (Saccharomyces cerevisiae (strain ATCC 204508 / S288c) (Baker's yeast)).